The primary structure comprises 507 residues: Putative UDP-glucuronosyltransferase ugt-60 (507 aa).

An N-terminal signal peptide occupies residues 1–15 (MYLPIFCIFLSVVDS). Residue Asn-312 is glycosylated (N-linked (GlcNAc...) asparagine). The chain crosses the membrane as a helical span at residues 379–399 (YNSFLEAAQAGIPAVLMPLFA).

It belongs to the UDP-glycosyltransferase family.

It localises to the membrane. It catalyses the reaction glucuronate acceptor + UDP-alpha-D-glucuronate = acceptor beta-D-glucuronoside + UDP + H(+). The protein is Putative UDP-glucuronosyltransferase ugt-60 (ugt-60) of Caenorhabditis elegans.